The primary structure comprises 90 residues: UPF0213 protein lmo0166 (90 aa).

Residues 5–80 (SEHFFYVLKC…KKLSRKNKDA (76 aa)) form the GIY-YIG domain.

This sequence belongs to the UPF0213 family.

The sequence is that of UPF0213 protein lmo0166 from Listeria monocytogenes serovar 1/2a (strain ATCC BAA-679 / EGD-e).